Consider the following 369-residue polypeptide: uncharacterized protein (369 aa).

A run of 9 helical transmembrane segments spans residues 25 to 45, 47 to 67, 119 to 139, 152 to 172, 206 to 226, 235 to 255, 272 to 292, 296 to 316, and 323 to 343; these read QFVA…WYDW, FCLL…FVPA, LNIV…FNLM, LSGF…FSAL, HALN…LLFV, LKPL…SLYL, PIAL…GVFG, FGIY…TVFL, and LIFF…FTVA.

To B.subtilis ComEC.

Its subcellular location is the cell membrane. This is an uncharacterized protein from Mycoplasma genitalium (strain ATCC 33530 / DSM 19775 / NCTC 10195 / G37) (Mycoplasmoides genitalium).